We begin with the raw amino-acid sequence, 556 residues long: General transcription factor IIF subunit 1 (556 aa).

2 disordered regions span residues 82-128 (TMTS…PAAA) and 226-499 (SRLQ…PFTE). Over residues 84 to 128 (TSAPNGTNSTGTTPNTTTTTTTTTTTTTTTTTAAGTPGAPNPAAA) the composition is skewed to low complexity. A compositionally biased stretch (basic and acidic residues) spans 245–275 (SGKKSIEELEEAEHRNRNEDPNRYKTTNEEK). 2 stretches are compositionally biased toward acidic residues: residues 291 to 338 (GNGE…DVDL) and 378 to 394 (GDDE…DQDD). Composition is skewed to basic and acidic residues over residues 415 to 427 (VKKE…DSKS) and 450 to 461 (NKSDSSVDNRES). The span at 469-492 (SSPQAVQPNSPSQQQQQQQQNIDP) shows a compositional bias: low complexity.

The protein belongs to the TFIIF alpha subunit family. As to quaternary structure, heterodimer of an alpha and a beta subunit.

Its subcellular location is the nucleus. Functionally, TFIIF is a general transcription initiation factor that binds to RNA polymerase II and helps to recruit it to the initiation complex in collaboration with TFIIB. It promotes transcription elongation. This Dictyostelium discoideum (Social amoeba) protein is General transcription factor IIF subunit 1 (gtf2f1).